A 178-amino-acid polypeptide reads, in one-letter code: Interleukin-1 receptor antagonist protein (178 aa).

Positions 1 to 26 (MEICWGPYSHLISLLLILLFHSEAAC) are cleaved as a signal peptide. C92 and C142 form a disulfide bridge. N-linked (GlcNAc...) asparagine glycosylation is present at N110.

Belongs to the IL-1 family.

It localises to the secreted. The protein resides in the cytoplasm. Its function is as follows. Anti-inflammatory antagonist of interleukin-1 family of proinflammatory cytokines such as interleukin-1beta/IL1B and interleukin-1alpha/IL1A. Protects from immune dysregulation and uncontrolled systemic inflammation triggered by IL1 for a range of innate stimulatory agents such as pathogens. This chain is Interleukin-1 receptor antagonist protein (Il1rn), found in Mus musculus (Mouse).